An 860-amino-acid polypeptide reads, in one-letter code: Leucine--tRNA ligase (860 aa).

The 'HIGH' region motif lies at 42 to 52 (PYPSGRLHMGH). The short motif at 619–623 (KMSKS) is the 'KMSKS' region element. Residue K622 participates in ATP binding.

Belongs to the class-I aminoacyl-tRNA synthetase family.

The protein localises to the cytoplasm. It carries out the reaction tRNA(Leu) + L-leucine + ATP = L-leucyl-tRNA(Leu) + AMP + diphosphate. This is Leucine--tRNA ligase from Pectobacterium carotovorum subsp. carotovorum (strain PC1).